We begin with the raw amino-acid sequence, 102 residues long: ATP-dependent Clp protease adapter protein ClpS (102 aa).

The span at 1 to 18 shows a compositional bias: basic and acidic residues; the sequence is MSQFDHQHLSDTEEKQEL. Residues 1 to 21 form a disordered region; the sequence is MSQFDHQHLSDTEEKQELKPP.

It belongs to the ClpS family. Binds to the N-terminal domain of the chaperone ClpA.

Involved in the modulation of the specificity of the ClpAP-mediated ATP-dependent protein degradation. The polypeptide is ATP-dependent Clp protease adapter protein ClpS (Idiomarina loihiensis (strain ATCC BAA-735 / DSM 15497 / L2-TR)).